We begin with the raw amino-acid sequence, 176 residues long: Pituitary adenylate cyclase-activating polypeptide (176 aa).

Residues 1–24 (MTMCSGARLALLVYGILMHSSVYG) form the signal peptide. Positions 25–80 (SPAASGLRFPGIRPENEAYDEDGNPQQDFYDSEPPGVGSPASALRDAYALYYPAEE) are excised as a propeptide. 2 disordered regions span residues 36–62 (IRPE…PGVG) and 115–134 (GTPG…RHSD). The important for receptor binding stretch occupies residues 150-158 (VKKYLAAVL). L158 bears the Leucine amide mark. Position 169 is a lysine amide (K169). Positions 173-176 (IPYL) are excised as a propeptide.

The protein belongs to the glucagon family.

The protein localises to the secreted. PACAP is a neuropeptide involved in diverse array of physiological processes through activating the PACAP subfamily of class B1 G protein-coupled receptors: VIP receptor 1 (VIPR1), VIP receptor 2 (VIPR2), and PACAP type I receptor (ADCYAP1R1). Exerts neuroprotective and general cytoprotective effects due to anti-apoptotic, anti-inflammatory, and antioxidant actions. Promotes neuron projection development through the RAPGEF2/Rap1/B-Raf/ERK pathway. In chromaffin cells, induces long-lasting increase of intracellular calcium concentrations and neuroendocrine secretion. Involved in the control of glucose homeostasis, induces insulin secretion by pancreatic beta cells. PACAP exists in two bioactive forms from proteolysis of the same precursor protein, PACAP27 and PACAP38, which differ by eleven amino acid residues in the C-terminus. The sequence is that of Pituitary adenylate cyclase-activating polypeptide (ADCYAP1) from Ovis aries (Sheep).